Reading from the N-terminus, the 157-residue chain is Crossover junction endodeoxyribonuclease RuvC (157 aa).

Active-site residues include aspartate 7, glutamate 67, and aspartate 139. Aspartate 7, glutamate 67, and aspartate 139 together coordinate Mg(2+).

The protein belongs to the RuvC family. As to quaternary structure, homodimer which binds Holliday junction (HJ) DNA. The HJ becomes 2-fold symmetrical on binding to RuvC with unstacked arms; it has a different conformation from HJ DNA in complex with RuvA. In the full resolvosome a probable DNA-RuvA(4)-RuvB(12)-RuvC(2) complex forms which resolves the HJ. Mg(2+) serves as cofactor.

It localises to the cytoplasm. The enzyme catalyses Endonucleolytic cleavage at a junction such as a reciprocal single-stranded crossover between two homologous DNA duplexes (Holliday junction).. In terms of biological role, the RuvA-RuvB-RuvC complex processes Holliday junction (HJ) DNA during genetic recombination and DNA repair. Endonuclease that resolves HJ intermediates. Cleaves cruciform DNA by making single-stranded nicks across the HJ at symmetrical positions within the homologous arms, yielding a 5'-phosphate and a 3'-hydroxyl group; requires a central core of homology in the junction. The consensus cleavage sequence is 5'-(A/T)TT(C/G)-3'. Cleavage occurs on the 3'-side of the TT dinucleotide at the point of strand exchange. HJ branch migration catalyzed by RuvA-RuvB allows RuvC to scan DNA until it finds its consensus sequence, where it cleaves and resolves the cruciform DNA. The chain is Crossover junction endodeoxyribonuclease RuvC from Prochlorococcus marinus (strain AS9601).